Here is a 221-residue protein sequence, read N- to C-terminus: 7-cyano-7-deazaguanine synthase (221 aa).

8–18 (LSGGMDSAAVI) provides a ligand contact to ATP. 4 residues coordinate Zn(2+): C186, C196, C199, and C202.

Belongs to the QueC family. It depends on Zn(2+) as a cofactor.

The catalysed reaction is 7-carboxy-7-deazaguanine + NH4(+) + ATP = 7-cyano-7-deazaguanine + ADP + phosphate + H2O + H(+). It functions in the pathway purine metabolism; 7-cyano-7-deazaguanine biosynthesis. In terms of biological role, catalyzes the ATP-dependent conversion of 7-carboxy-7-deazaguanine (CDG) to 7-cyano-7-deazaguanine (preQ(0)). This is 7-cyano-7-deazaguanine synthase from Stenotrophomonas maltophilia (strain K279a).